A 182-amino-acid polypeptide reads, in one-letter code: Nudix hydrolase 17, mitochondrial (182 aa).

The transit peptide at 1–26 (MGVEKMVCLASRTGRQFQRYNKGRRQ) directs the protein to the mitochondrion. The Nudix hydrolase domain occupies 27-158 (VVGCVPYRFK…WMKEALDVLV (132 aa)). A Nudix box motif is present at residues 65–86 (GGWELDESVEEAASRECLEEAG). Mg(2+) contacts are provided by glutamate 80 and glutamate 84.

This sequence belongs to the Nudix hydrolase family. Mg(2+) is required as a cofactor. It depends on Mn(2+) as a cofactor. In terms of tissue distribution, expressed in roots, leaves, stems and inflorescences.

It localises to the mitochondrion. Its function is as follows. Probably mediates the hydrolysis of some nucleoside diphosphate derivatives. In Arabidopsis thaliana (Mouse-ear cress), this protein is Nudix hydrolase 17, mitochondrial (NUDT17).